Here is a 417-residue protein sequence, read N- to C-terminus: NADH-quinone oxidoreductase subunit D (417 aa).

Belongs to the complex I 49 kDa subunit family. In terms of assembly, NDH-1 is composed of 14 different subunits. Subunits NuoB, C, D, E, F, and G constitute the peripheral sector of the complex.

The protein localises to the cell inner membrane. The catalysed reaction is a quinone + NADH + 5 H(+)(in) = a quinol + NAD(+) + 4 H(+)(out). Functionally, NDH-1 shuttles electrons from NADH, via FMN and iron-sulfur (Fe-S) centers, to quinones in the respiratory chain. The immediate electron acceptor for the enzyme in this species is believed to be ubiquinone. Couples the redox reaction to proton translocation (for every two electrons transferred, four hydrogen ions are translocated across the cytoplasmic membrane), and thus conserves the redox energy in a proton gradient. This is NADH-quinone oxidoreductase subunit D from Nitrosospira multiformis (strain ATCC 25196 / NCIMB 11849 / C 71).